A 156-amino-acid chain; its full sequence is Small ribosomal subunit protein uS7 (156 aa).

Belongs to the universal ribosomal protein uS7 family. In terms of assembly, part of the 30S ribosomal subunit. Contacts proteins S9 and S11.

One of the primary rRNA binding proteins, it binds directly to 16S rRNA where it nucleates assembly of the head domain of the 30S subunit. Is located at the subunit interface close to the decoding center, probably blocks exit of the E-site tRNA. This chain is Small ribosomal subunit protein uS7, found in Halalkalibacterium halodurans (strain ATCC BAA-125 / DSM 18197 / FERM 7344 / JCM 9153 / C-125) (Bacillus halodurans).